Reading from the N-terminus, the 268-residue chain is UPF0739 protein C1orf74 homolog (268 aa).

It belongs to the UPF0739 family.

The sequence is that of UPF0739 protein C1orf74 homolog from Salmo salar (Atlantic salmon).